Reading from the N-terminus, the 635-residue chain is MERWSINDSAKIYNLNNWGADLFSINKKGNVCVHPSSNSKHSIDLRALVDDLIKRKIKPPILLRFMDVLQGRIASINRVFKNAIQENNYPAKYQTFYPIKVNQQRQVVEAIANFGKRYNIGLEVGSKPELVAGISFATGNNLPIICNGYKDTEYIEMVLSATKIGYDITLVVEKLFELEKIIELVKKTGVQPKLGIRVKLSSKGIGKWATSGGEDAKFGLRMSEIIAAIEMLEKHDLIKCVKLLHFHIGSQITKIDKIKTALIEGARIYAEMRKLGVGIEYLDIGGGLGVDYDGSKSSNFSSVNYSIEEYANDVIYQIKNICEDAGVECPNIISESGRATVAHYSVLVTNVLNTNTQNIMPDFEATLNEAEKLAPTVKKLEDIYKSIDRYSLREDYHDTLQLIQEAVSLFNLGYLTLNDRAMAEWLYGKIIRKINSIVEKIKPIPEELQNFQLSLRQTYFANFSLFQSVPDSWAIDQLFPIVPIQRLNQKPDVIASIADITCDSDGEITSFVGENGRTKFLPLHKIRKDEAYYIGFFLIGAYQEILGDMHNLFGDTNAVHITFNKKTGYIIDTVINGDATWESLKYVQYKGPEILKRVRDNLEKDVALRKISIEESSHFLELLDRTLLGYTYLGE.

Position 100 is an N6-(pyridoxal phosphate)lysine (Lys100). 282-292 (LDIGGGLGVDY) is a binding site for substrate.

Belongs to the Orn/Lys/Arg decarboxylase class-II family. SpeA subfamily. It depends on Mg(2+) as a cofactor. Pyridoxal 5'-phosphate serves as cofactor.

The catalysed reaction is L-arginine + H(+) = agmatine + CO2. It functions in the pathway amine and polyamine biosynthesis; agmatine biosynthesis; agmatine from L-arginine: step 1/1. Its function is as follows. Catalyzes the biosynthesis of agmatine from arginine. The sequence is that of Biosynthetic arginine decarboxylase from Geotalea uraniireducens (strain Rf4) (Geobacter uraniireducens).